Reading from the N-terminus, the 173-residue chain is Placenta-specific protein 1 (173 aa).

A signal peptide spans 1 to 23 (MKLIKFLGGVVFFTLMFSGYSEQ).

Belongs to the PLAC1 family.

Its subcellular location is the secreted. May play a role in placental development. This is Placenta-specific protein 1 from Rattus norvegicus (Rat).